The sequence spans 432 residues: Glutamate-1-semialdehyde 2,1-aminomutase (432 aa).

An N6-(pyridoxal phosphate)lysine modification is found at Lys-272.

It belongs to the class-III pyridoxal-phosphate-dependent aminotransferase family. HemL subfamily. In terms of assembly, homodimer. The cofactor is pyridoxal 5'-phosphate.

The protein resides in the cytoplasm. It carries out the reaction (S)-4-amino-5-oxopentanoate = 5-aminolevulinate. Its pathway is porphyrin-containing compound metabolism; protoporphyrin-IX biosynthesis; 5-aminolevulinate from L-glutamyl-tRNA(Glu): step 2/2. It participates in porphyrin-containing compound metabolism; chlorophyll biosynthesis. The chain is Glutamate-1-semialdehyde 2,1-aminomutase from Nostoc sp. (strain PCC 7120 / SAG 25.82 / UTEX 2576).